Consider the following 714-residue polypeptide: Transcription factor SFL2 (714 aa).

The DNA-binding element occupies 15–134 (AFVHKLYTML…LVYIKRRSSS (120 aa)). 3 disordered regions span residues 187–467 (YYQQ…VGVT), 565–658 (STSV…NNTN), and 670–714 (SHSQ…NMNK). Pro residues-rich tracts occupy residues 193–207 (GQVPPPPPPSLPPHQ) and 223–235 (QPPPAPPAPPPQP). Over residues 266 to 275 (LDQTQPLSYT) the composition is skewed to polar residues. Over residues 276 to 285 (PQLEYQQQQY) the composition is skewed to low complexity. Pro residues predominate over residues 286–296 (PQPPLPPPPPQ). Polar residues-rich tracts occupy residues 310 to 321 (DNLSRPSPNEQH) and 354 to 372 (SEGSPKTQPNHSVSLLNNE). Positions 376–389 (ESSTSSSSTTVTST) are enriched in low complexity. 2 stretches are compositionally biased toward polar residues: residues 413–435 (SRMNNQQSFNRTPSISTPPTQNG) and 444–461 (LIPSNTESQSPTMVTGTD). The segment covering 574-591 (GPFSTSTSTSTTSPTLSS) has biased composition (low complexity). A compositionally biased stretch (polar residues) spans 599-608 (EPQNSTIANG). Low complexity-rich tracts occupy residues 609–641 (TSIRSSISSSQSISSPPLTTTTTTTTTDQRQLS) and 648–658 (QQQQQPNNNTN). Over residues 703-714 (SKSDDDTDNMNK) the composition is skewed to basic and acidic residues.

The protein belongs to the HSF family.

Its subcellular location is the nucleus. Transcription factor that plays a role of activator of filamentous growth and which is involved in invasive growth at a high temperature. Required for human oral epithelium colonization and damage. Promotes filamentous growth in EFG1- and FLO8-dependent manners. Antagonizes functions of SFL1. The chain is Transcription factor SFL2 (SFL2) from Candida albicans (strain SC5314 / ATCC MYA-2876) (Yeast).